The chain runs to 628 residues: Somatic embryogenesis receptor kinase 2 (628 aa).

The first 29 residues, 1-29, serve as a signal peptide directing secretion; it reads MGRKKFEAFGFVCLISLLLLFNSLWLASS. The Extracellular segment spans residues 30-241; it reads NMEGDALHSL…PTPGGYSATG (212 aa). Residues 45 to 85 form a PSKR1 binding region; sequence DPNNVLQSWDPTLVNPCTWFHVTCNNENSVIRVDLGNADLS. The segment at 56–58 is CLE44 binding; sequence TLV. A disulfide bridge connects residues Cys61 and Cys68. Leucine-rich repeat receptor-like protein kinase binding regions lie at residues 62-81 and 100-105; these read TWFH…DLGN and YLELYS. 64-65 contacts brassinolide; it reads FH. LRR repeat units lie at residues 95 to 119, 121 to 143, 144 to 167, and 168 to 192; these read LKNL…LGNL, NLVS…LGKL, FKLR…LTNI, and MTLQ…SFSL. N-linked (GlcNAc...) asparagine glycans are attached at residues Asn107 and Asn118. Leucine-rich repeat receptor-like protein kinase binding stretches follow at residues 126–129 and 148–150; these read DLYL and FLR. 2 N-linked (GlcNAc...) asparagine glycosylation sites follow: Asn153 and Asn187. Residues 174 to 197 are leucine-rich repeat receptor-like protein kinase binding; it reads DLSNNRLSGSVPDNGSFSLFTPIS. Cysteines 205 and 213 form a disulfide. The chain crosses the membrane as a helical span at residues 242 to 262; the sequence is AIAGGVAAGAALLFAAPALAF. The Cytoplasmic segment spans residues 263–628; sequence AWWRRRKPQE…LHAMELSGPR (366 aa). At Thr302 the chain carries Phosphothreonine. Positions 305–592 constitute a Protein kinase domain; that stretch reads FSNKNILGRG…GLAEKWDEWQ (288 aa). 311–319 is a binding site for ATP; sequence LGRGGFGKV. Thr328 bears the Phosphothreonine mark. Lys333 is a binding site for ATP. Phosphoserine occurs at positions 386 and 389. The active-site Proton acceptor is Asp432. Thr462, Thr465, Thr466, and Thr471 each carry phosphothreonine. Tyr479 carries the post-translational modification Phosphotyrosine. The residue at position 481 (Ser481) is a Phosphoserine. Phosphothreonine is present on Thr482. A Phosphoserine modification is found at Ser486. Thr562 is subject to Phosphothreonine. Phosphoserine is present on Ser604. The residue at position 616 (Thr616) is a Phosphothreonine. Ser625 carries the post-translational modification Phosphoserine.

The protein belongs to the protein kinase superfamily. Ser/Thr protein kinase family. Homo- and heterodimer. Component of the SERK1 signaling complex, composed of KAPP, CDC48A, GRF6 or GRF7, SERK1, SERK2, SERK3/BAK1 and BRI1. Bind to BRI1 in a brassinolide-dependent manner. Heterodimer with PSKR1. Interacts with the EF-Tu receptor EFR and FLS2 in a specific ligand-induced manner. Interacts with ERECTA in a EPF2-induced manner. Interacts with ERL1 in a EPF1-induced manner. Interacts with TMM. In the presence of the signal peptide RGF1, interacts with RGI3/RGFR1 and RGI4/RGFR2/SKM2. Binds to the peptide CLE44 in the presence of TDR. In terms of processing, autophosphorylated. As to expression, expressed in flowers, tapetum, developing microspores, all cells of the embryo sac, provascular strands and developing vascular bundles. Low expression in adult vascular tissue.

Its subcellular location is the cell membrane. The enzyme catalyses L-seryl-[protein] + ATP = O-phospho-L-seryl-[protein] + ADP + H(+). It carries out the reaction L-threonyl-[protein] + ATP = O-phospho-L-threonyl-[protein] + ADP + H(+). In terms of biological role, serine/threonine-kinase involved in brassinosteroid-dependent and -independent signaling pathways. Acts redundantly with SERK1 as a control point for sporophytic development controlling male gametophyte production. Serves as coreceptor to small peptide (e.g. RGF1 and CLE44) signaling. Involved in the perception of phytosulfokine and subsequent signal transduction. This chain is Somatic embryogenesis receptor kinase 2, found in Arabidopsis thaliana (Mouse-ear cress).